A 223-amino-acid polypeptide reads, in one-letter code: MARRPGSSSRGPARSDRLPAEAVTSARKPHAAAPTPPASPDPGLVLLGEFGRPHGLHGEVRLKSHTSEPLAIAGYGPLHASDGRTLELANVRPAAGSSPDLLIVRVKGVDDRTGAEALNRVTLAIARERLGKVEDEDEFFLTDLIGLTVEDGAGTVIGTIVAVPNFGGGDLLEIRPAAGGPTALLPFTKAFVPSLDIAGGKVVADPPDDLFAPPGPKPADDPG.

Low complexity predominate over residues 1–12 (MARRPGSSSRGP). 2 disordered regions span residues 1 to 44 (MARR…DPGL) and 204 to 223 (ADPPDDLFAPPGPKPADDPG). A PRC barrel domain is found at 136-210 (EDEFFLTDLI…KVVADPPDDL (75 aa)).

This sequence belongs to the RimM family. As to quaternary structure, binds ribosomal protein uS19.

Its subcellular location is the cytoplasm. In terms of biological role, an accessory protein needed during the final step in the assembly of 30S ribosomal subunit, possibly for assembly of the head region. Essential for efficient processing of 16S rRNA. May be needed both before and after RbfA during the maturation of 16S rRNA. It has affinity for free ribosomal 30S subunits but not for 70S ribosomes. The sequence is that of Ribosome maturation factor RimM from Methylorubrum extorquens (strain PA1) (Methylobacterium extorquens).